We begin with the raw amino-acid sequence, 236 residues long: 5'-methylthioadenosine/S-adenosylhomocysteine nucleosidase (236 aa).

Glutamate 12 (proton acceptor) is an active-site residue. Substrate is bound by residues glycine 78, isoleucine 153, and 174-175 (ME). Aspartate 198 serves as the catalytic Proton donor.

The protein belongs to the PNP/UDP phosphorylase family. MtnN subfamily.

It catalyses the reaction S-adenosyl-L-homocysteine + H2O = S-(5-deoxy-D-ribos-5-yl)-L-homocysteine + adenine. The enzyme catalyses S-methyl-5'-thioadenosine + H2O = 5-(methylsulfanyl)-D-ribose + adenine. It carries out the reaction 5'-deoxyadenosine + H2O = 5-deoxy-D-ribose + adenine. Its pathway is amino-acid biosynthesis; L-methionine biosynthesis via salvage pathway; S-methyl-5-thio-alpha-D-ribose 1-phosphate from S-methyl-5'-thioadenosine (hydrolase route): step 1/2. Its function is as follows. Catalyzes the irreversible cleavage of the glycosidic bond in both 5'-methylthioadenosine (MTA) and S-adenosylhomocysteine (SAH/AdoHcy) to adenine and the corresponding thioribose, 5'-methylthioribose and S-ribosylhomocysteine, respectively. Also cleaves 5'-deoxyadenosine, a toxic by-product of radical S-adenosylmethionine (SAM) enzymes, into 5-deoxyribose and adenine. The sequence is that of 5'-methylthioadenosine/S-adenosylhomocysteine nucleosidase from Shewanella baltica (strain OS223).